Here is a 505-residue protein sequence, read N- to C-terminus: Ribosomal RNA small subunit methyltransferase F (505 aa).

S-adenosyl-L-methionine contacts are provided by residues 123–129 (ASAPGSK), Glu-147, Asp-174, and Asp-192. The Nucleophile role is filled by Cys-245. Residues 409–437 (GTNANNNSNTNPNNNANTNPNNNSNTNPR) form a disordered region. Over residues 410–435 (TNANNNSNTNPNNNANTNPNNNSNTN) the composition is skewed to low complexity.

The protein belongs to the class I-like SAM-binding methyltransferase superfamily. RsmB/NOP family.

It localises to the cytoplasm. It carries out the reaction cytidine(1407) in 16S rRNA + S-adenosyl-L-methionine = 5-methylcytidine(1407) in 16S rRNA + S-adenosyl-L-homocysteine + H(+). Specifically methylates the cytosine at position 1407 (m5C1407) of 16S rRNA. The protein is Ribosomal RNA small subunit methyltransferase F of Shewanella denitrificans (strain OS217 / ATCC BAA-1090 / DSM 15013).